A 176-amino-acid chain; its full sequence is Translation initiation factor IF-3 (176 aa).

It belongs to the IF-3 family. In terms of assembly, monomer.

Its subcellular location is the cytoplasm. Functionally, IF-3 binds to the 30S ribosomal subunit and shifts the equilibrium between 70S ribosomes and their 50S and 30S subunits in favor of the free subunits, thus enhancing the availability of 30S subunits on which protein synthesis initiation begins. The protein is Translation initiation factor IF-3 of Streptococcus pyogenes serotype M4 (strain MGAS10750).